Reading from the N-terminus, the 231-residue chain is Putative 3-methyladenine DNA glycosylase (231 aa).

Belongs to the DNA glycosylase MPG family.

The sequence is that of Putative 3-methyladenine DNA glycosylase from Pseudomonas fluorescens (strain Pf0-1).